Reading from the N-terminus, the 644-residue chain is Biosynthetic arginine decarboxylase (644 aa).

The residue at position 105 (Lys105) is an N6-(pyridoxal phosphate)lysine. Substrate is bound at residue 287-297 (LDVGGGLGIDY).

It belongs to the Orn/Lys/Arg decarboxylase class-II family. SpeA subfamily. It depends on Mg(2+) as a cofactor. Pyridoxal 5'-phosphate is required as a cofactor.

The enzyme catalyses L-arginine + H(+) = agmatine + CO2. In terms of biological role, catalyzes the biosynthesis of agmatine from arginine. The chain is Biosynthetic arginine decarboxylase from Parasynechococcus marenigrum (strain WH8102).